The sequence spans 123 residues: Holo-[acyl-carrier-protein] synthase (123 aa).

The Mg(2+) site is built by aspartate 9 and glutamate 57.

Belongs to the P-Pant transferase superfamily. AcpS family. Requires Mg(2+) as cofactor.

The protein localises to the cytoplasm. The enzyme catalyses apo-[ACP] + CoA = holo-[ACP] + adenosine 3',5'-bisphosphate + H(+). Its function is as follows. Transfers the 4'-phosphopantetheine moiety from coenzyme A to a Ser of acyl-carrier-protein. This Streptomyces coelicolor (strain ATCC BAA-471 / A3(2) / M145) protein is Holo-[acyl-carrier-protein] synthase.